Here is a 232-residue protein sequence, read N- to C-terminus: Zinc finger protein RTS2 (232 aa).

The C2H2-type zinc finger occupies 24 to 48 (YYCQICQRQCKDANGFQSHNKSPSH). Disordered stretches follow at residues 180 to 199 (AKRQTEKVYQPEMKSEISGD) and 211 to 232 (GNGRVNKKKKKVPPRKDGIKFR).

It is found in the nucleus. This is Zinc finger protein RTS2 (RTS2) from Saccharomyces cerevisiae (strain ATCC 204508 / S288c) (Baker's yeast).